We begin with the raw amino-acid sequence, 142 residues long: Ribosome maturation factor RimP (142 aa).

The protein belongs to the RimP family.

The protein resides in the cytoplasm. Required for maturation of 30S ribosomal subunits. The protein is Ribosome maturation factor RimP of Nitrosospira multiformis (strain ATCC 25196 / NCIMB 11849 / C 71).